Here is a 445-residue protein sequence, read N- to C-terminus: Glucose-6-phosphate isomerase (445 aa).

The active-site Proton donor is the Glu287. Catalysis depends on residues His308 and Lys422.

Belongs to the GPI family.

It localises to the cytoplasm. It carries out the reaction alpha-D-glucose 6-phosphate = beta-D-fructose 6-phosphate. It functions in the pathway carbohydrate biosynthesis; gluconeogenesis. Its pathway is carbohydrate degradation; glycolysis; D-glyceraldehyde 3-phosphate and glycerone phosphate from D-glucose: step 2/4. Its function is as follows. Catalyzes the reversible isomerization of glucose-6-phosphate to fructose-6-phosphate. The sequence is that of Glucose-6-phosphate isomerase from Bacteroides fragilis (strain ATCC 25285 / DSM 2151 / CCUG 4856 / JCM 11019 / LMG 10263 / NCTC 9343 / Onslow / VPI 2553 / EN-2).